The following is a 563-amino-acid chain: MEPHHDGHILKVLPMLASNENFSRLTTAFVAGIAAHIIIFRRGEWDIAAARIPVGLFILQSCLFSYYLFVPGPPTSIYTALWLVGQITLGFIAGTTVSILSYRAFFHRLNSFPGPFPARLSMWYVTSLYAQNPDAFNTVRGLHQQYGDFVRTGPTELSVNHPDALQAVHSGRSECTKGPWYSMLHPFISLFAIRDKAEHSRRRKPWELAFRPNAVLEYLPALEKGTNELLEQVERRKGKSMDMTYWINLFTFDLTGRVAFSQEYECVKHNKRHPIMEINDSSNLVTGVVSHVVWLISFIKATPGLNANMKALIGFSEEQVQNRQKMQTSGQRDVFSWLWEDFKEQGMETPQSKLDLVADASLVIFAGSGTVAVTIIGCLYFLTSTSPDYLTQIRQELDTLDEINSHTLSKVQTLNAVINETLRLHYPALSGFQRQTPPGGLHIAGRYIPGNTNIKIPFYTLFLDERNFAEPEKFIPERWTTRKELVKNPEAFAPFLLGPYNCLGKSLALMQVRHVLVELIRRYEIVLAPGADPEKYWRERTDGFVMGLAPLDLAFTEREMAGF.

Transmembrane regions (helical) follow at residues 20-40 (ENFS…IIIF), 52-72 (IPVG…FVPG), and 80-100 (ALWL…VSIL). Asn279 carries N-linked (GlcNAc...) asparagine glycosylation. A helical membrane pass occupies residues 362 to 382 (LVIFAGSGTVAVTIIGCLYFL). N-linked (GlcNAc...) asparagine glycosylation occurs at Asn419. Cys502 is a heme binding site.

The protein belongs to the cytochrome P450 family. The cofactor is heme.

Its subcellular location is the membrane. Its pathway is alkaloid biosynthesis. Functionally, cytochrome P450 monooxygenase; part of the gene cluster that mediates the biosynthesis of paraherquamide, a fungal indole alkaloid that belongs to a family of natural products containing a characteristic bicyclo[2.2.2]diazaoctane core. The first steps in the biosynthesis of paraherquamide is the production of the beta-methyl-proline precursor from L-isoleucine. They require oxidation of a terminally hydroxylated L-isoleucine to the corresponding aldehyde by enzymes which have still to be identified. Spontaneous cyclization and dehydration would yield the 4-methyl pyrolline-5-carboxylic acid, which is then reduced by the pyrroline-5-carboxylate reductase phqD leading to the beta-methyl-proline precursor. The next step of paraherquamide biosynthesis involves coupling of beta-methyl-proline and L-tryptophan by the bimodular NRPS phqB, to produce a monooxopiperazine intermediate. The reductase (R) domain of phqB utilizes NADPH for hydride transfer to reduce the thioester bond of the T domain-tethered linear dipeptide to a hemithioaminal intermediate, which spontaneously cleaves the C-S bond to release the aldehyde product. This compound undergoes spontaneous cyclization and dehydration to give a dienamine which is reverse prenylated at C-2 by the reverse prenyltransferase phqJ. The other prenyltransferase present in the cluster, phqI may be a redundant gene in the pathway. During biosynthetic assembly, the key step to produce the polycyclic core is catalyzed by the bifunctional reductase and intramolecular [4+2] Diels-Alderase, phqE, resulting in formation of the [2.2.2] diazaoctane intermediate preparaherquamide. Following formation of preparaherquamide, an indole 2,3-epoxidation-initiated pinacol-like rearrangement is catalyzed by the phqK FAD-dependent monooxygenase. The prenyltransferase phqA, the cytochrome P450 monooxygenase phqL, and the FAD-linked oxidoreductase phqH (or the cytochrome P450 monooxygenase phqM), are proposed to be involved in the formation of the pyran ring. The FAD-dependent monooxygenase phqK is likely responsible for generation of the spiro-oxindole, and the N-methylation is likely mediated by the phqN methyltransferase leading to the isolable natural product paraherquamide F. However, the order of these biosynthetic steps has still to be determined. In late-stage paraherquamide biosynthesis, the third P450 monooxygenase, phqO, is probably responsible for the C-14 hydroxylation, transforming paraherquamide F to paraherquamide G, and paraherquamide E to the final product paraherquamide A. The expansion from the 6-membered ring pyran (in paraherquamides F and G) to the 7-membered dioxepin ring (in paraherquamides A and E) represents a poorly understood but intriguing process that probably involves the 2-oxoglutarate-dependent dioxygenase phqC. Finally, the remaining members of the paraherquamide cluster, including phqI as well as phqM (or phqH), do not have a clearly prescribed role and appear to be redundant. The polypeptide is Cytochrome P450 monooxygenase phqL (Penicillium fellutanum).